We begin with the raw amino-acid sequence, 164 residues long: C-phycoerythrin alpha chain (164 aa).

(2R,3E)-phycoerythrobilin-binding residues include Cys82 and Cys139.

Belongs to the phycobiliprotein family. In terms of assembly, heterodimer of an alpha and a beta chain. In terms of processing, contains two covalently linked bilin chromophores.

Its subcellular location is the cellular thylakoid membrane. In terms of biological role, light-harvesting photosynthetic bile pigment-protein from the phycobiliprotein complex. This is C-phycoerythrin alpha chain (cpeA) from Microchaete diplosiphon (Fremyella diplosiphon).